A 459-amino-acid chain; its full sequence is Nuclear distribution protein nudF 1 (459 aa).

One can recognise a LisH domain in the interval 9–41 (QAEELHKSIIAYLSANNLSNAASALRGELGLSE). Positions 61 to 88 (TSIVRLQKKIMDLEARCGALQTELNNAT) form a coiled coil. 8 WD repeats span residues 114–155 (SHRN…TTLK), 157–197 (HTRA…KNIR), 201–240 (GHEH…CVKT), 243–282 (GHSG…NPEA), 288–349 (GHDH…LMTL), 351–390 (GHDN…KCVK), 395–440 (AHGR…PQVQ), and 442–459 (RCVV…IFAN).

It belongs to the WD repeat LIS1/nudF family. Self-associates. Interacts with nudE and dynein.

It is found in the cytoplasm. The protein localises to the cytoskeleton. Its subcellular location is the spindle pole. Its function is as follows. Positively regulates the activity of the minus-end directed microtubule motor protein dynein. May enhance dynein-mediated microtubule sliding by targeting dynein to the microtubule plus end. Required for nuclear migration during vegetative growth as well as development. Required for retrograde early endosome (EE) transport from the hyphal tip. Required for localization of dynein to the mitotic spindle poles. Recruits additional proteins to the dynein complex at SPBs. The polypeptide is Nuclear distribution protein nudF 1 (Talaromyces marneffei (strain ATCC 18224 / CBS 334.59 / QM 7333) (Penicillium marneffei)).